We begin with the raw amino-acid sequence, 264 residues long: Thymidylate synthase (264 aa).

A dUMP-binding site is contributed by arginine 21. Histidine 51 provides a ligand contact to (6R)-5,10-methylene-5,6,7,8-tetrahydrofolate. 126–127 (RR) lines the dUMP pocket. The active-site Nucleophile is the cysteine 146. DUMP is bound by residues 166–169 (RSAD), asparagine 177, and 207–209 (HLY). Aspartate 169 contributes to the (6R)-5,10-methylene-5,6,7,8-tetrahydrofolate binding site. Position 263 (alanine 263) interacts with (6R)-5,10-methylene-5,6,7,8-tetrahydrofolate.

It belongs to the thymidylate synthase family. Bacterial-type ThyA subfamily. Homodimer.

It is found in the cytoplasm. The enzyme catalyses dUMP + (6R)-5,10-methylene-5,6,7,8-tetrahydrofolate = 7,8-dihydrofolate + dTMP. It participates in pyrimidine metabolism; dTTP biosynthesis. Its function is as follows. Catalyzes the reductive methylation of 2'-deoxyuridine-5'-monophosphate (dUMP) to 2'-deoxythymidine-5'-monophosphate (dTMP) while utilizing 5,10-methylenetetrahydrofolate (mTHF) as the methyl donor and reductant in the reaction, yielding dihydrofolate (DHF) as a by-product. This enzymatic reaction provides an intracellular de novo source of dTMP, an essential precursor for DNA biosynthesis. The chain is Thymidylate synthase from Bartonella bacilliformis (strain ATCC 35685 / KC583 / Herrer 020/F12,63).